The sequence spans 1992 residues: E3 ubiquitin-protein ligase TRIP12 (1992 aa).

Residues 1–10 (MSNRPNNNPG) show a composition bias toward polar residues. Residues 1–398 (MSNRPNNNPG…SGESESDDSE (398 aa)) are disordered. An N-acetylserine modification is found at Ser2. Residue Ser12 is modified to Phosphoserine. Residues 18-27 (RNTAGAQPQD) are compositionally biased toward polar residues. Residues 29–43 (SIGGRSCSSSSVVIV) are compositionally biased toward low complexity. Over residues 48-70 (DPDRANTSEKQKTGQVPKKDNSR) the composition is skewed to basic and acidic residues. Residues Ser77, Ser85, and Ser100 each carry the phosphoserine modification. Residues 78 to 88 (PDYNRTNSPSS) are compositionally biased toward polar residues. Residues 154–164 (SSCIKSASVSE) are compositionally biased toward polar residues. Composition is skewed to low complexity over residues 175–188 (PTKL…SAKA) and 196–215 (SSSA…ASSA). Position 181 is an N6-acetyllysine (Lys181). Polar residues predominate over residues 280–290 (PGSSKSETSKP). Residues Ser310 and Ser312 each carry the phosphoserine modification. Over residues 330-339 (GSCASASRRG) the composition is skewed to low complexity. Over residues 346-358 (GAAEARRQEKMAD) the composition is skewed to basic and acidic residues. Over residues 362 to 371 (NQETVNSSAA) the composition is skewed to polar residues. The WWE domain maps to 749 to 836 (MLKKGNAQNT…DPELAKSFIK (88 aa)). Residues 938-1044 (SLLTSPPKAC…QSPKSSFLAS (107 aa)) form a disordered region. Ser942 is modified (phosphoserine). Over residues 948 to 960 (TNGSGSLGSTPSV) the composition is skewed to polar residues. Low complexity predominate over residues 961–973 (NSGTATAATNASA). Residues Ser991 and Ser997 each carry the phosphoserine modification. Basic residues predominate over residues 1001–1014 (KRKRLPKRGSRRPK). At Ser1016 the chain carries Phosphoserine. The segment covering 1017 to 1026 (PPRDDDKVDN) has biased composition (basic and acidic residues). Positions 1029–1040 (KSPTTTQSPKSS) are enriched in low complexity. 5 positions are modified to phosphoserine: Ser1030, Ser1317, Ser1322, Ser1329, and Ser1376. Residue Thr1377 is modified to Phosphothreonine. Disordered stretches follow at residues 1407 to 1434 (SNKD…AKKH) and 1568 to 1587 (TNPE…PRLD). N6-acetyllysine is present on Lys1425. Phosphoserine is present on Ser1427. The tract at residues 1496-1570 (EIIPTSEFIN…AMQRLLDTNP (75 aa)) is K-box. Residues 1885–1992 (PDHGYTHDSR…REGQQSFHLS (108 aa)) form the HECT domain. The active-site Glycyl thioester intermediate is Cys1959.

This sequence belongs to the UPL family. K-HECT subfamily. In terms of assembly, interacts with MYC; leading to disrupt interaction with isoform p19ARF/ARF of CDKN2A. Interacts with TRADD; leading to disrupt interaction with isoform p19ARF/ARF of CDKN2A. Interacts with SMARCC1; leading to disrupt interaction with SMARCE1.

It is found in the nucleus. The protein localises to the nucleoplasm. It catalyses the reaction S-ubiquitinyl-[E2 ubiquitin-conjugating enzyme]-L-cysteine + [acceptor protein]-L-lysine = [E2 ubiquitin-conjugating enzyme]-L-cysteine + N(6)-ubiquitinyl-[acceptor protein]-L-lysine.. It functions in the pathway protein modification; protein ubiquitination. E3 ubiquitin-protein ligase involved in ubiquitin fusion degradation (UFD) pathway and regulation of DNA repair. Part of the ubiquitin fusion degradation (UFD) pathway, a process that mediates ubiquitination of protein at their N-terminus, regardless of the presence of lysine residues in target proteins. Acts as a key regulator of DNA damage response by acting as a suppressor of RNF168, an E3 ubiquitin-protein ligase that promotes accumulation of 'Lys-63'-linked histone H2A and H2AX at DNA damage sites, thereby acting as a guard against excessive spreading of ubiquitinated chromatin at damaged chromosomes. In normal cells, mediates ubiquitination and degradation of isoform p19ARF/ARF of CDKN2A, a lysine-less tumor suppressor required for p53/TP53 activation under oncogenic stress. In cancer cells, however, isoform p19ARF/ARF and TRIP12 are located in different cell compartments, preventing isoform p19ARF/ARF ubiquitination and degradation. Does not mediate ubiquitination of isoform p16-INK4a of CDKN2A. Also catalyzes ubiquitination of NAE1 and SMARCE1, leading to their degradation. Ubiquitination and degradation of target proteins is regulated by interaction with proteins such as MYC, TRADD or SMARCC1, which disrupt the interaction between TRIP12 and target proteins. Mediates ubiquitination of ASXL1: following binding to N(6)-methyladenosine methylated DNA, ASXL1 is ubiquitinated by TRIP12, leading to its degradation and subsequent inactivation of the PR-DUB complex. The sequence is that of E3 ubiquitin-protein ligase TRIP12 (TRIP12) from Bos taurus (Bovine).